A 48-amino-acid chain; its full sequence is SPbeta prophage-derived uncharacterized protein YotE (48 aa).

This chain is SPbeta prophage-derived uncharacterized protein YotE (yotE), found in Bacillus subtilis (strain 168).